The primary structure comprises 164 residues: MYRIRVFGDPVLRKRAKPVTKFDDNLEKTIERMIETMYHYDGVGLAAPQVGISQRFFVMDVGNGPVAVINPEILEIDPETEVAEEGCLSFPEIFVEIERSKRIKVRYQNTKGEYVEEVLEGYAARVFQHEFDHLNGVLIIDRISPAKRLLLRKKLMDIARTVKR.

2 residues coordinate Fe cation: C87 and H129. E130 is a catalytic residue. A Fe cation-binding site is contributed by H133.

Belongs to the polypeptide deformylase family. Requires Fe(2+) as cofactor.

The catalysed reaction is N-terminal N-formyl-L-methionyl-[peptide] + H2O = N-terminal L-methionyl-[peptide] + formate. Removes the formyl group from the N-terminal Met of newly synthesized proteins. Requires at least a dipeptide for an efficient rate of reaction. N-terminal L-methionine is a prerequisite for activity but the enzyme has broad specificity at other positions. In Thermotoga petrophila (strain ATCC BAA-488 / DSM 13995 / JCM 10881 / RKU-1), this protein is Peptide deformylase.